A 100-amino-acid polypeptide reads, in one-letter code: Sodium-influx-stimulating peptide (100 aa).

The signal sequence occupies residues 1 to 23; that stretch reads MLSSVALRYLLVLSLAFLAVVTS.

Post-translationally, three disulfide bonds are present. In terms of tissue distribution, expressed by the yellow cells, peptidergic (neuroendocrine) neurons of the central nervous system.

Stimulates integumental Na(+) uptake. Controls the activity of sodium pumps in the integument, pericardium, ureter and nephridial gland. This Lymnaea stagnalis (Great pond snail) protein is Sodium-influx-stimulating peptide (SIS).